The sequence spans 452 residues: Acetyl-CoA decarbonylase/synthase complex subunit delta (452 aa).

It belongs to the CdhD family. In terms of assembly, heterodimer of delta and gamma chains. The ACDS complex is made up of alpha, epsilon, beta, gamma and delta chains with a probable stoichiometry of (alpha(2)epsilon(2))(4)-beta(8)-(gamma(1)delta(1))(8).

Functionally, part of a complex that catalyzes the reversible cleavage of acetyl-CoA, allowing autotrophic growth from CO(2). Probably maintains the overall quaternary structure of the ACDS complex. The protein is Acetyl-CoA decarbonylase/synthase complex subunit delta of Archaeoglobus fulgidus (strain ATCC 49558 / DSM 4304 / JCM 9628 / NBRC 100126 / VC-16).